The following is a 353-amino-acid chain: Phosphate acyltransferase (353 aa).

This sequence belongs to the PlsX family. As to quaternary structure, homodimer. Probably interacts with PlsY.

The protein resides in the cytoplasm. It carries out the reaction a fatty acyl-[ACP] + phosphate = an acyl phosphate + holo-[ACP]. The protein operates within lipid metabolism; phospholipid metabolism. Its function is as follows. Catalyzes the reversible formation of acyl-phosphate (acyl-PO(4)) from acyl-[acyl-carrier-protein] (acyl-ACP). This enzyme utilizes acyl-ACP as fatty acyl donor, but not acyl-CoA. This is Phosphate acyltransferase from Rhodopseudomonas palustris (strain BisB18).